An 837-amino-acid polypeptide reads, in one-letter code: Phosphatidylinositol-glycan-specific phospholipase D (837 aa).

Positions 1–23 (MSAGRLWSSLLLLLPLFCSKSSS) are cleaved as a signal peptide. N-linked (GlcNAc...) asparagine glycans are attached at residues N94, N267, N287, N303, and N317. 7 FG-GAP repeats span residues 364–425 (SPSA…GLPP), 431–492 (NKEG…GRLS), 494–554 (SPNV…RNDK), 561–619 (EADW…SLGK), 629–689 (QSTI…GATR), 701–767 (ALLS…TLGD), and 785–837 (QYVL…FSSD). N477, N496, N586, N599, and N655 each carry an N-linked (GlcNAc...) asparagine glycan.

It belongs to the GPLD1 family. Monomer. Widely expressed.

The protein resides in the secreted. It carries out the reaction a 6-(alpha-D-glucosaminyl)-1-(1,2-diacyl-sn-glycero-3-phospho)-1D-myo-inositol + H2O = 6-(alpha-D-glucosaminyl)-1D-myo-inositol + a 1,2-diacyl-sn-glycero-3-phosphate + H(+). Its function is as follows. This protein hydrolyzes the inositol phosphate linkage in proteins anchored by phosphatidylinositol glycans (GPI-anchor) thus releasing these proteins from the membrane. The polypeptide is Phosphatidylinositol-glycan-specific phospholipase D (Gpld1) (Mus musculus (Mouse)).